The primary structure comprises 292 residues: N-acetylneuraminate lyase (292 aa).

Ser47 and Thr48 together coordinate aceneuramate. The active-site Proton donor is Tyr136. The active-site Schiff-base intermediate with substrate is Lys164. Positions 166, 188, 190, 191, and 207 each coordinate aceneuramate.

Belongs to the DapA family. NanA subfamily. In terms of assembly, homotetramer.

The protein resides in the cytoplasm. The catalysed reaction is aceneuramate = aldehydo-N-acetyl-D-mannosamine + pyruvate. Its pathway is amino-sugar metabolism; N-acetylneuraminate degradation; D-fructose 6-phosphate from N-acetylneuraminate: step 1/5. Functionally, catalyzes the reversible aldol cleavage of N-acetylneuraminic acid (sialic acid; Neu5Ac) to form pyruvate and N-acetylmannosamine (ManNAc) via a Schiff base intermediate. This is N-acetylneuraminate lyase from Histophilus somni (strain 129Pt) (Haemophilus somnus).